Consider the following 223-residue polypeptide: 26S proteasome non-ATPase regulatory subunit 9 (223 aa).

Residues 103–121 (RDKEKQARDMAEAHKEAMS) are compositionally biased toward basic and acidic residues. The segment at 103 to 141 (RDKEKQARDMAEAHKEAMSRKLGQSESQGPPRAFAKVNS) is disordered. One can recognise a PDZ domain in the interval 108–195 (QARDMAEAHK…KPLNVTVIRR (88 aa)). Serine 129 is modified (phosphoserine).

The protein belongs to the proteasome subunit p27 family. In terms of assembly, interacts with PSMC3. Part of a transient complex (modulator) containing PSMD9, PSMC6 and PSMC3 formed during the assembly of the 26S proteasome. In terms of tissue distribution, expressed in all tissues tested, highly expressed in liver and kidney.

Its function is as follows. Acts as a chaperone during the assembly of the 26S proteasome, specifically of the base subcomplex of the PA700/19S regulatory complex (RC). During the base subcomplex assembly is part of an intermediate PSMD9:PSMC6:PSMC3 module, also known as modulator trimer complex; PSMD9 is released during the further base assembly process. The polypeptide is 26S proteasome non-ATPase regulatory subunit 9 (PSMD9) (Homo sapiens (Human)).